An 85-amino-acid chain; its full sequence is CRISPR-associated endoribonuclease Cas2 (85 aa).

Asp8 lines the Mg(2+) pocket.

This sequence belongs to the CRISPR-associated endoribonuclease Cas2 protein family. In terms of assembly, homodimer, forms a heterotetramer with a Cas1 homodimer. The cofactor is Mg(2+).

CRISPR (clustered regularly interspaced short palindromic repeat), is an adaptive immune system that provides protection against mobile genetic elements (viruses, transposable elements and conjugative plasmids). CRISPR clusters contain sequences complementary to antecedent mobile elements and target invading nucleic acids. CRISPR clusters are transcribed and processed into CRISPR RNA (crRNA). Functions as a ssRNA-specific endoribonuclease. Involved in the integration of spacer DNA into the CRISPR cassette. The protein is CRISPR-associated endoribonuclease Cas2 of Pyrococcus furiosus (strain ATCC 43587 / DSM 3638 / JCM 8422 / Vc1).